The chain runs to 162 residues: Transcription elongation factor GreA (162 aa).

Residues 45-74 (ENAEYEAAREKQAFIEGRIKELEDMTARAE) are a coiled coil.

The protein belongs to the GreA/GreB family.

Necessary for efficient RNA polymerase transcription elongation past template-encoded arresting sites. The arresting sites in DNA have the property of trapping a certain fraction of elongating RNA polymerases that pass through, resulting in locked ternary complexes. Cleavage of the nascent transcript by cleavage factors such as GreA or GreB allows the resumption of elongation from the new 3'terminus. GreA releases sequences of 2 to 3 nucleotides. This chain is Transcription elongation factor GreA, found in Rickettsia felis (strain ATCC VR-1525 / URRWXCal2) (Rickettsia azadi).